Consider the following 341-residue polypeptide: MNIVVEFFVVTFKVLWAFVLAAARWLVRPKEKSVAGQVCLITGAGSGLGRLFALEFARRRALLVLWDINTQSNEETAGMVRHIYRDLEAADAAALQAGNGEEEILPHCNLQVFTYTCDVGKRENVYLTAERVRKEVGEVSVLVNNAGVVSGHHLLECPDELIERTMMVNCHAHFWTTKAFLPTMLEINHGHIVTVASSLGLFSTAGVEDYCASKFGVVGFHESLSHELKAAEKDGIKTTLVCPYLVDTGMFRGCRIRKEIEPFLPPLKPDYCVKQAMKAILTDQPMICTPRLMYIVTFMKSILPFEAVVCMYRFLGADKCMYPFIAQRKQATNNNEAKNGI.

Residues 3–23 (IVVEFFVVTFKVLWAFVLAAA) form a helical; Signal-anchor membrane-spanning segment. Residue 40 to 64 (LITGAGSGLGRLFALEFARRRALLV) participates in NADP(+) binding. Position 197 (S197) interacts with substrate. Residue Y210 is the Proton acceptor of the active site.

It belongs to the short-chain dehydrogenases/reductases (SDR) family. Detected in retinal pigment epithelium (at protein level). Detected in retina, retinal pigment epithelium, and at lower levels in cornea, liver, kidney, pancreas, lung, brain and skeletal muscle.

It is found in the microsome membrane. The protein localises to the endoplasmic reticulum membrane. The enzyme catalyses all-trans-retinol + NADP(+) = all-trans-retinal + NADPH + H(+). Its pathway is cofactor metabolism; retinol metabolism. Its function is as follows. Retinol dehydrogenase with a clear preference for NADP. Converts all-trans-retinol to all-trans-retinal. Has no detectable activity towards 11-cis-retinol, 9-cis-retinol and 13-cis-retinol. In Bos taurus (Bovine), this protein is Retinol dehydrogenase 10 (RDH10).